A 381-amino-acid chain; its full sequence is E3 ubiquitin-protein ligase Fancl (381 aa).

The tract at residues 110 to 293 (NIYYDILALY…MFDLCYFPMP (184 aa)) is UBC-RWD region (URD). An RING-CH-type; degenerate zinc finger spans residues 303-374 (EEDNEELRCN…PFCKAKLSTS (72 aa)). Residues Cys311, Cys314, Cys329, Cys334, His339, Cys342, Cys364, and Cys367 each contribute to the Zn(2+) site.

Interacts (via C-terminus) with FANCI and Fancd2.

It localises to the nucleus. The catalysed reaction is S-ubiquitinyl-[E2 ubiquitin-conjugating enzyme]-L-cysteine + [acceptor protein]-L-lysine = [E2 ubiquitin-conjugating enzyme]-L-cysteine + N(6)-ubiquitinyl-[acceptor protein]-L-lysine.. The protein operates within protein modification; protein ubiquitination. Functionally, ubiquitin ligase protein that mediates monoubiquitination of Fancd2. Ubiquitination of Fancd2 is stimulated by ionising radiation. Together with Fancd2, and probably FANCI, involved in DNA repair of damage caused by agents that induce interstrand cross-links but not agents that cause double strand breaks. In Drosophila melanogaster (Fruit fly), this protein is E3 ubiquitin-protein ligase Fancl.